The primary structure comprises 25 residues: FVKELWDKVKKMGSAAWSAAKGAFA.

The protein belongs to the ponericin-L family. In terms of tissue distribution, expressed by the venom gland.

The protein resides in the secreted. It is found in the target cell membrane. Membrane-perturbating peptide with multiple activities. It is insecticidal, since it induces reversible paralysis in insects (L.cuprina) after 1 hour, but fails to kill them. It shows moderate antibacterial activity against some Gram-positive and Gram-negative bacteria. It is also antiparasitic, since it moderately inhibits the larval development of the major pathogenic nematode of ruminants (H.contortus, IC(50)=23.2 uM), but fails to reduce the motility of adult males of the other nematode B.malayi. It also shows moderate cytotoxic activity against HEK293 cells (EC(50)=48-57 uM) but does not induce hemolysis in human erythrocytes. It also causes a moderate increase in intracellular calcium concentration on neuronal and epithelial cell lines, which supports a non-specific membrane perturbation mechanism of action. In Neoponera commutata (Large hunting ant), this protein is M-poneritoxin-Nc2a.